A 151-amino-acid chain; its full sequence is uncharacterized protein (151 aa).

The protein to equivalent protein in phage 82.

This is an uncharacterized protein from Escherichia coli (strain K12).